A 494-amino-acid polypeptide reads, in one-letter code: MKKQAFSSEQYLNLQRDHILERINQFDGKLYLEFGGKMLEDFHAARVLPGYEPDNKIKLLQELKEQVEVVIAINASNIEHSKARGDLGISYDQEVLRLIDKFNELGIFVGSVVITQYAGQPAADAFRNQLEKNGIDSYLHYPIKGYPTDMDHIISPEGMGKNDYIKTSRNLIVVTAPGPGSGKLATCMSNMYHDQINVIKSGYAKFETFPVWNLPLHHPVNLAYEAATADLDDVNMIDPFHLQTYGETTVNYNRDIEIFPVLKRMLERILGKSPYASPTDMGVNMVGFAITDDEAAVEASKQEIIRRYYQTVLDFKAEKVGEAAVKKIELLMNDLGITPADRKVAVVARQKAEETGGPALAFELPNGEIVTGKNSELFGPTAAALINAIKKSADIAKEVKLIEPEVVKPIQGLKIDHLGSRNPRLHSNEILIALAITATENPDAARAMEELGNLKGSEAHSTIILTDEDKNVLRKLGINVTFDPYYQYDRLYRK.

This sequence belongs to the UPF0371 family.

This is UPF0371 protein SPT_0390 from Streptococcus pneumoniae (strain Taiwan19F-14).